We begin with the raw amino-acid sequence, 230 residues long: MKITWLGHSGFRIAIEQAVLLVDPWLTGNPLFPADRREEALAGATHILITHGHGDHTGDTVAIAKERGLPVVGIYDLVTWLQEKEGIDGIGFNKGGTVTLGGARVTMVQATHSSSMSGEAGPIYTGTESGYMIAGEGHVIYLSGDTDIMADMGWMGEYHRPDVGILSAGGHFTMDMKRAAFAARKYFDFRTVIPCHYRTFPLLEQSAEALKEGLPGVEVIEPQVLVPIEI.

It belongs to the UPF0173 family.

The chain is UPF0173 metal-dependent hydrolase RSKD131_0588 from Cereibacter sphaeroides (strain KD131 / KCTC 12085) (Rhodobacter sphaeroides).